We begin with the raw amino-acid sequence, 80 residues long: Lantibiotic Flvalpha.b (80 aa).

A propeptide spans 1 to 38 (MNKNPIYRSEEEAKNIACGNVAAELDENSQALDAINGA) (cleaved by FlvT). Thr-43 and Thr-47 each carry 2,3-didehydrobutyrine; by FlvM1. Positions 52-55 (TVGC) form a cross-link, beta-methyllanthionine (Thr-Cys); by FlvM1. The lanthionine (Ser-Cys); by FlvM1 cross-link spans 58–68 (SYGLGNGGYCC). 2 consecutive cross-links (beta-methyllanthionine (Thr-Cys); by FlvM1) follow at residues 69 to 74 (TYTVEC) and 71 to 78 (TVECSKTC).

The lanthionine formed by Ser-58 and Cys-68 forms a putative lipid II binding motif. Post-translationally, maturation of FlvA1 peptides involves the enzymatic conversion of Thr, and Ser into dehydrated AA and the formation of thioether bonds with cysteines. Modifications are processed by the flavecin synthetase FlvM1. This is followed by membrane translocation and cleavage of the modified precursor. In terms of processing, contains DL-lanthionine and DL-beta-methyllanthionine, when coepressed in E.coli with the flavecin synthetase FlvM1.

The protein resides in the secreted. Lanthionine-containing peptide antibiotic (lantibiotic) only active on Gram-positive bacteria in synergy with Flvbeta peptides, which are encoded by the same operon than Flvalpha.a. Shows antibacterial activity in synergy with Flvbeta.b, Flvbeta.c, Flvbeta.e and Flvbeta.g. Does not show antibacterial activity when tested with Flvbeta.a, Flvbeta.d, Flvbeta.f and Flvbeta.h. The bactericidal activity of lantibiotics is based on depolarization of energized bacterial cytoplasmic membranes, initiated by the formation of aqueous transmembrane pores. This chain is Lantibiotic Flvalpha.b, found in Ruminococcus flavefaciens.